The following is a 735-amino-acid chain: Alpha-adducin (735 aa).

M1 is subject to N-acetylmethionine. The segment covering 1–11 (MNGDTRAAVVT) has biased composition (low complexity). A disordered region spans residues 1 to 21 (MNGDTRAAVVTSPPPTTAPHK). Position 12 is a phosphoserine (S12). The residue at position 59 (S59) is a Phosphoserine; by PKA. S64 is modified (phosphoserine). Phosphothreonine is present on T331. Phosphoserine occurs at positions 334, 353, and 355. Position 358 is a phosphothreonine (T358). Phosphoserine occurs at positions 364 and 366. S408 carries the post-translational modification Phosphoserine; by PKA. Disordered regions lie at residues 418 to 486 (GHSF…SAVP) and 576 to 735 (RREV…KSDS). A Phosphoserine modification is found at S427. T429 carries the post-translational modification Phosphothreonine. A Phosphoserine modification is found at S431. S436 carries the post-translational modification Phosphoserine; by PKA. Phosphothreonine; by ROCK2 is present on T445. 2 positions are modified to phosphoserine: S464 and S465. T480 carries the post-translational modification Phosphothreonine; by ROCK2. Residue S481 is modified to Phosphoserine; by PKA. Residues 576 to 601 (RREVERKQKGSEENLDETREQKEKSP) are compositionally biased toward basic and acidic residues. Residues S586, S600, and S605 each carry the phosphoserine modification. Residue T610 is modified to Phosphothreonine. Phosphoserine is present on S613. T614 carries the post-translational modification Phosphothreonine. Low complexity predominate over residues 678-712 (EPASASAPGAEEVASPATEEGSPMDPGSDGSPGKS). 3 positions are modified to phosphoserine: S705, S708, and S712. Positions 713-735 (PSKKKKKFRTPSFLKKSKKKSDS) are enriched in basic residues. S714 is modified (phosphoserine; by PKC). The tract at residues 715-732 (KKKKKFRTPSFLKKSKKK) is interaction with calmodulin. Position 724 is a phosphoserine; by PKA and PKC (S724).

Belongs to the aldolase class II family. Adducin subfamily. In terms of assembly, heterodimer of an alpha and a beta subunit or an alpha and a gamma subunit.

The protein resides in the cytoplasm. The protein localises to the cytoskeleton. It localises to the cell membrane. Membrane-cytoskeleton-associated protein that promotes the assembly of the spectrin-actin network. Binds to calmodulin. The protein is Alpha-adducin (Add1) of Rattus norvegicus (Rat).